The following is a 25-amino-acid chain: Galactose-binding lectin-2 (25 aa).

In terms of assembly, homodimer. N-glycosylated.

D-galactose specific lectin. Binds in decreasing order of affinity: melibiose, N-acetyllactosamine, D-galacturonic acid, D-galactose, methyl-alpha-D-galactoside, D-galactose, methyl-alpha-D-galactopyranoside, methyl-beta-D-galactopyranoside and lactose. Binds also the glycoproteins globotriose, asialofetuin and mucin. Possesses glycan-dependent cytotoxic activity against Burkitt's lymphoma Raji cells and erythroleukemia K562 cells. Has calcium-independent hemagglutinating activity towards human erythrocytes. In Aplysia kurodai (Kuroda's sea hare), this protein is Galactose-binding lectin-2.